A 2327-amino-acid polypeptide reads, in one-letter code: Pre-mRNA-processing-splicing factor 8 homolog (2327 aa).

Residues 1 to 14 (MDDTNSNINQSNES) are compositionally biased toward polar residues. The interval 1–20 (MDDTNSNINQSNESQHLEEK) is disordered. The tract at residues 801-1292 (TTVHWLEKRR…KIQTRVKIGL (492 aa)) is reverse transcriptase homology domain. Residues 1293-1566 (NSKMPNRFPP…TLKISLIQIF (274 aa)) are linker. Residues 1502–1515 (MKYKKLTHAQRSGL) are important for branch point selection. The restriction endonuclease homology domain stretch occupies residues 1570–1740 (LWQKIHESLV…LRERIRKGLQ (171 aa)). An involved in interaction with pre-mRNA 5' splice site region spans residues 1657 to 2023 (GDFDSHDIER…QIAEIEKQKT (367 aa)). The RNase H homology domain stretch occupies residues 1755–2008 (NFGELFSNKI…ILGMEISAPS (254 aa)). Positions 2093 to 2223 (TYVFPKNILK…LTAYHLTPSG (131 aa)) constitute an MPN domain.

As to quaternary structure, part of the U5 snRNP complex and of the U4/U6-U5 tri-snRNP complex.

The protein resides in the nucleus speckle. In terms of biological role, functions as a scaffold that mediates the ordered assembly of spliceosomal proteins and snRNAs. Required for the assembly of the U4/U6-U5 tri-snRNP complex. Functions as a scaffold that positions spliceosomal U2, U5 and U6 snRNAs at splice sites on pre-mRNA substrates, so that splicing can occur. Interacts with both the 5' and the 3' splice site. The sequence is that of Pre-mRNA-processing-splicing factor 8 homolog (prpf8) from Dictyostelium discoideum (Social amoeba).